Here is a 562-residue protein sequence, read N- to C-terminus: NAD-dependent malic enzyme (562 aa).

Tyr-101 (proton donor) is an active-site residue. Residue Arg-154 participates in NAD(+) binding. Lys-172 acts as the Proton acceptor in catalysis. A divalent metal cation-binding residues include Glu-243, Asp-244, and Asp-267. NAD(+) contacts are provided by Asp-267 and Asn-415.

The protein belongs to the malic enzymes family. In terms of assembly, homotetramer. Mg(2+) is required as a cofactor. It depends on Mn(2+) as a cofactor.

The catalysed reaction is (S)-malate + NAD(+) = pyruvate + CO2 + NADH. It catalyses the reaction oxaloacetate + H(+) = pyruvate + CO2. The polypeptide is NAD-dependent malic enzyme (Shewanella woodyi (strain ATCC 51908 / MS32)).